The sequence spans 980 residues: Probable outer membrane protein PmpH (980 aa).

Positions 1 to 24 (MPFSLRSTSFCFLACLCSYSYGLA) are cleaved as a signal peptide. The 320-residue stretch at 661–980 (GELVPNSLWV…FVSLGLNRIF (320 aa)) folds into the Autotransporter domain.

Belongs to the PMP outer membrane protein family.

It is found in the secreted. It localises to the cell wall. Its subcellular location is the cell outer membrane. The sequence is that of Probable outer membrane protein PmpH (pmpH) from Chlamydia muridarum (strain MoPn / Nigg).